Reading from the N-terminus, the 647-residue chain is LIM domain kinase 1 (647 aa).

LIM zinc-binding domains are found at residues 25 to 75 (CASC…CKKD) and 84 to 137 (CHGC…CGHC). Positions 165–258 (LVSIPASSHG…LLQLTLEHDP (94 aa)) constitute a PDZ domain. Ser-210 is subject to Phosphoserine. Thr-229 is subject to Phosphothreonine. The interval 260–319 (DTLGHGLGPETSPLSSPAYTPSGEAGSSARQKPVLRSCSIDRSPGAGSLGSPASQRKDLG) is disordered. Phosphoserine occurs at positions 298, 302, 307, and 310. A compositionally biased stretch (low complexity) spans 302–313 (SPGAGSLGSPAS). Ser-323 carries the post-translational modification Phosphoserine; by MAPKAPK2. Ser-337 is modified (phosphoserine). Residues 339–604 (LIHGEVLGKG…PSFVKLEHWL (266 aa)) enclose the Protein kinase domain. ATP contacts are provided by residues 345 to 353 (LGKGCFGQA) and Lys-368. Asp-460 is an active-site residue. Position 508 is a phosphothreonine; by ROCK1 and PAK1 (Thr-508).

Belongs to the protein kinase superfamily. TKL Ser/Thr protein kinase family. In terms of assembly, interacts (via LIM domain) with the cytoplasmic domain of NRG1. Interacts with NISCH. Interacts with RLIM and RNF6. Self-associates to form homodimers. Interacts with HSP90AA1; this interaction promotes LIMK1 dimerization and subsequent transphosphorylation. Interacts with CDKN1C. Interacts with SSH1. Interacts with ROCK1. Interacts (via LIM zinc-binding domains) with FAM89B/LRAP25 (via LRR repeat). Forms a tripartite complex with CDC42BPA, CDC42BPB and FAM89B/LRAP25. Post-translationally, autophosphorylated. Phosphorylated on Thr-508 by ROCK1 and PAK1, resulting in activation. Phosphorylated by PAK4 which increases the ability of LIMK1 to phosphorylate cofilin. Phosphorylated at Ser-323 by MAPKAPK2 during activation of VEGFA-induced signaling, which results in activation of LIMK1 and promotion of actin reorganization, cell migration, and tubule formation of endothelial cells. Dephosphorylated and inactivated by SSH1. Phosphorylated by CDC42BP. Ubiquitinated. 'Lys-48'-linked polyubiquitination by RNF6 leads to proteasomal degradation through the 26S proteasome, modulating LIMK1 levels in the growth cone and its effect on axonal outgrowth. Also polyubiquitinated by RLIM. As to expression, highest expression in both adult and fetal nervous system. Detected ubiquitously throughout the different regions of adult brain, with highest levels in the cerebral cortex. Expressed to a lesser extent in heart and skeletal muscle.

Its subcellular location is the cytoplasm. The protein localises to the nucleus. It localises to the cytoskeleton. The protein resides in the cell projection. It is found in the lamellipodium. It catalyses the reaction L-seryl-[protein] + ATP = O-phospho-L-seryl-[protein] + ADP + H(+). The enzyme catalyses L-threonyl-[protein] + ATP = O-phospho-L-threonyl-[protein] + ADP + H(+). In terms of biological role, serine/threonine-protein kinase that plays an essential role in the regulation of actin filament dynamics. Acts downstream of several Rho family GTPase signal transduction pathways. Activated by upstream kinases including ROCK1, PAK1 and PAK4, which phosphorylate LIMK1 on a threonine residue located in its activation loop. LIMK1 subsequently phosphorylates and inactivates the actin binding/depolymerizing factors cofilin-1/CFL1, cofilin-2/CFL2 and destrin/DSTN, thereby preventing the cleavage of filamentous actin (F-actin), and stabilizing the actin cytoskeleton. In this way LIMK1 regulates several actin-dependent biological processes including cell motility, cell cycle progression, and differentiation. Phosphorylates TPPP on serine residues, thereby promoting microtubule disassembly. Stimulates axonal outgrowth and may be involved in brain development. Its function is as follows. Has a dominant negative effect on actin cytoskeletal changes. Required for atypical chemokine receptor ACKR2-induced phosphorylation of cofilin (CFL1). The protein is LIM domain kinase 1 (LIMK1) of Homo sapiens (Human).